The chain runs to 599 residues: uncharacterized protein (599 aa).

Residue 49 to 56 (GPPGSGKT) coordinates ATP. Positions 416–599 (AEVRKELEYK…TKIFEEKFSV (184 aa)) constitute a Macro domain.

The protein in the N-terminal section; belongs to the AAA ATPase family. RarA/MGS1/WRNIP1 subfamily.

This is an uncharacterized protein from Thermotoga maritima (strain ATCC 43589 / DSM 3109 / JCM 10099 / NBRC 100826 / MSB8).